The following is a 105-amino-acid chain: Large ribosomal subunit protein uL24 (105 aa).

It belongs to the universal ribosomal protein uL24 family. Part of the 50S ribosomal subunit.

Functionally, one of two assembly initiator proteins, it binds directly to the 5'-end of the 23S rRNA, where it nucleates assembly of the 50S subunit. In terms of biological role, one of the proteins that surrounds the polypeptide exit tunnel on the outside of the subunit. This Nitrosococcus oceani (strain ATCC 19707 / BCRC 17464 / JCM 30415 / NCIMB 11848 / C-107) protein is Large ribosomal subunit protein uL24.